A 359-amino-acid polypeptide reads, in one-letter code: Peptide methionine sulfoxide reductase MsrA/MsrB (359 aa).

The tract at residues 36–189 (RVIYLAGGCF…PSGYCHIDLK (154 aa)) is peptide methionine sulfoxide reductase A. Residue C44 is part of the active site. A MsrB domain is found at 206 to 329 (DEVLKKKLTK…NSAALRFIPL (124 aa)). Catalysis depends on C318, which acts as the Nucleophile.

In the N-terminal section; belongs to the MsrA Met sulfoxide reductase family. This sequence in the C-terminal section; belongs to the MsrB Met sulfoxide reductase family.

It catalyses the reaction L-methionyl-[protein] + [thioredoxin]-disulfide + H2O = L-methionyl-(S)-S-oxide-[protein] + [thioredoxin]-dithiol. The catalysed reaction is [thioredoxin]-disulfide + L-methionine + H2O = L-methionine (S)-S-oxide + [thioredoxin]-dithiol. It carries out the reaction L-methionyl-[protein] + [thioredoxin]-disulfide + H2O = L-methionyl-(R)-S-oxide-[protein] + [thioredoxin]-dithiol. In terms of biological role, has an important function as a repair enzyme for proteins that have been inactivated by oxidation. Catalyzes the reversible oxidation-reduction of methionine sulfoxide in proteins to methionine. This is Peptide methionine sulfoxide reductase MsrA/MsrB (msrAB) from Helicobacter pylori (strain ATCC 700392 / 26695) (Campylobacter pylori).